The chain runs to 300 residues: Ribonuclease Z (300 aa).

Positions 63, 65, 67, 68, 140, 207, and 265 each coordinate Zn(2+). The Proton acceptor role is filled by Asp-67.

This sequence belongs to the RNase Z family. Homodimer. Zn(2+) is required as a cofactor.

It carries out the reaction Endonucleolytic cleavage of RNA, removing extra 3' nucleotides from tRNA precursor, generating 3' termini of tRNAs. A 3'-hydroxy group is left at the tRNA terminus and a 5'-phosphoryl group is left at the trailer molecule.. Functionally, zinc phosphodiesterase, which displays some tRNA 3'-processing endonuclease activity. Probably involved in tRNA maturation, by removing a 3'-trailer from precursor tRNA. The protein is Ribonuclease Z of Ignicoccus hospitalis (strain KIN4/I / DSM 18386 / JCM 14125).